The sequence spans 335 residues: Foldase protein PrsA (335 aa).

Positions 1–20 (MKKKIFAGAVTLLSVAVLAA) are cleaved as a signal peptide. The N-palmitoyl cysteine moiety is linked to residue C21. C21 carries S-diacylglycerol cysteine lipidation. One can recognise a PpiC domain in the interval 142 to 239 (TPEVTAQIIK…ASYYIVKLVK (98 aa)). A disordered region spans residues 300-335 (TGSSTSSSSAASSSKTSESSSAAESSSKEASSSAAE). Low complexity predominate over residues 302–335 (SSTSSSSAASSSKTSESSSAAESSSKEASSSAAE).

This sequence belongs to the PrsA family.

The protein resides in the cell membrane. The catalysed reaction is [protein]-peptidylproline (omega=180) = [protein]-peptidylproline (omega=0). Its function is as follows. Plays a major role in protein secretion by helping the post-translocational extracellular folding of several secreted proteins. The chain is Foldase protein PrsA from Streptococcus sanguinis (strain SK36).